A 296-amino-acid chain; its full sequence is 4-hydroxybenzoate octaprenyltransferase (296 aa).

Transmembrane regions (helical) follow at residues 28–48 (PIGI…AGKG), 52–72 (LKTV…GCVI), 102–122 (ALAL…FTNA), 146–166 (YYPQ…AFTA), 169–189 (GDLP…TVGY), 219–239 (VIIL…GARF), 241–261 (LGAC…WEFW), and 275–295 (FLHN…DYAV).

This sequence belongs to the UbiA prenyltransferase family. Mg(2+) is required as a cofactor.

Its subcellular location is the cell inner membrane. It catalyses the reaction all-trans-octaprenyl diphosphate + 4-hydroxybenzoate = 4-hydroxy-3-(all-trans-octaprenyl)benzoate + diphosphate. It functions in the pathway cofactor biosynthesis; ubiquinone biosynthesis. Catalyzes the prenylation of para-hydroxybenzoate (PHB) with an all-trans polyprenyl group. Mediates the second step in the final reaction sequence of ubiquinone-8 (UQ-8) biosynthesis, which is the condensation of the polyisoprenoid side chain with PHB, generating the first membrane-bound Q intermediate 3-octaprenyl-4-hydroxybenzoate. This is 4-hydroxybenzoate octaprenyltransferase from Pseudomonas savastanoi pv. phaseolicola (strain 1448A / Race 6) (Pseudomonas syringae pv. phaseolicola (strain 1448A / Race 6)).